Consider the following 35-residue polypeptide: Photosystem II reaction center protein T (35 aa).

The helical transmembrane segment at 3 to 23 (ALVYTFLLVSTLGIIFFAIFF) threads the bilayer.

It belongs to the PsbT family. As to quaternary structure, PSII is composed of 1 copy each of membrane proteins PsbA, PsbB, PsbC, PsbD, PsbE, PsbF, PsbH, PsbI, PsbJ, PsbK, PsbL, PsbM, PsbT, PsbY, PsbZ, Psb30/Ycf12, at least 3 peripheral proteins of the oxygen-evolving complex and a large number of cofactors. It forms dimeric complexes.

It is found in the plastid. It localises to the chloroplast thylakoid membrane. Found at the monomer-monomer interface of the photosystem II (PS II) dimer, plays a role in assembly and dimerization of PSII. PSII is a light-driven water plastoquinone oxidoreductase, using light energy to abstract electrons from H(2)O, generating a proton gradient subsequently used for ATP formation. This chain is Photosystem II reaction center protein T, found in Pinus thunbergii (Japanese black pine).